Here is a 352-residue protein sequence, read N- to C-terminus: Maleylacetate reductase (352 aa).

Belongs to the iron-containing alcohol dehydrogenase family.

It carries out the reaction 3-oxoadipate + NAD(+) = maleylacetate + NADH + H(+). It catalyses the reaction 3-oxoadipate + NADP(+) = maleylacetate + NADPH + H(+). It participates in aromatic compound metabolism; 3-chlorocatechol degradation. This is Maleylacetate reductase (tcbF) from Pseudomonas sp. (strain P51).